A 439-amino-acid chain; its full sequence is Xylose isomerase (439 aa).

Residues histidine 101 and aspartate 104 contribute to the active site. Positions 232, 268, 271, 296, 307, 309, and 339 each coordinate Mg(2+).

Belongs to the xylose isomerase family. As to quaternary structure, homotetramer. Requires Mg(2+) as cofactor.

It localises to the cytoplasm. It carries out the reaction alpha-D-xylose = alpha-D-xylulofuranose. This is Xylose isomerase from Yersinia enterocolitica serotype O:8 / biotype 1B (strain NCTC 13174 / 8081).